Here is a 156-residue protein sequence, read N- to C-terminus: Cyanate hydratase (156 aa).

Catalysis depends on residues Arg-96, Glu-99, and Ser-122.

The protein belongs to the cyanase family.

The catalysed reaction is cyanate + hydrogencarbonate + 3 H(+) = NH4(+) + 2 CO2. In terms of biological role, catalyzes the reaction of cyanate with bicarbonate to produce ammonia and carbon dioxide. The protein is Cyanate hydratase of Burkholderia vietnamiensis (strain G4 / LMG 22486) (Burkholderia cepacia (strain R1808)).